The primary structure comprises 280 residues: Phosphatidylglycerol--prolipoprotein diacylglyceryl transferase (280 aa).

3 helical membrane-spanning segments follow: residues 15 to 35 (IFSI…IFAL), 60 to 80 (FIGL…PVFF), and 90 to 110 (IWEG…VLLF). Arg-138 is a binding site for a 1,2-diacyl-sn-glycero-3-phospho-(1'-sn-glycerol). Transmembrane regions (helical) follow at residues 217 to 237 (MPFG…RIFL) and 257 to 277 (GQLL…NIYV).

This sequence belongs to the Lgt family.

The protein resides in the cell membrane. The enzyme catalyses L-cysteinyl-[prolipoprotein] + a 1,2-diacyl-sn-glycero-3-phospho-(1'-sn-glycerol) = an S-1,2-diacyl-sn-glyceryl-L-cysteinyl-[prolipoprotein] + sn-glycerol 1-phosphate + H(+). Its pathway is protein modification; lipoprotein biosynthesis (diacylglyceryl transfer). Catalyzes the transfer of the diacylglyceryl group from phosphatidylglycerol to the sulfhydryl group of the N-terminal cysteine of a prolipoprotein, the first step in the formation of mature lipoproteins. This chain is Phosphatidylglycerol--prolipoprotein diacylglyceryl transferase, found in Buchnera aphidicola subsp. Baizongia pistaciae (strain Bp).